A 605-amino-acid polypeptide reads, in one-letter code: DNA mismatch repair protein MutL (605 aa).

This sequence belongs to the DNA mismatch repair MutL/HexB family.

Functionally, this protein is involved in the repair of mismatches in DNA. It is required for dam-dependent methyl-directed DNA mismatch repair. May act as a 'molecular matchmaker', a protein that promotes the formation of a stable complex between two or more DNA-binding proteins in an ATP-dependent manner without itself being part of a final effector complex. The chain is DNA mismatch repair protein MutL from Pelotomaculum thermopropionicum (strain DSM 13744 / JCM 10971 / SI).